Reading from the N-terminus, the 101-residue chain is Ubiquitin-related modifier 1 (101 aa).

1-thioglycine is present on G101. G101 is covalently cross-linked (Glycyl lysine isopeptide (Gly-Lys) (interchain with K-? in acceptor proteins)).

Belongs to the URM1 family. In terms of processing, C-terminal thiocarboxylation occurs in 2 steps, it is first acyl-adenylated (-COAMP) via the hesA/moeB/thiF part of UBA4, then thiocarboxylated (-COSH) via the rhodanese domain of UBA4.

It localises to the cytoplasm. The protein operates within tRNA modification; 5-methoxycarbonylmethyl-2-thiouridine-tRNA biosynthesis. Its function is as follows. Acts as a sulfur carrier required for 2-thiolation of mcm(5)S(2)U at tRNA wobble positions of cytosolic tRNA(Lys), tRNA(Glu) and tRNA(Gln). Serves as sulfur donor in tRNA 2-thiolation reaction by being thiocarboxylated (-COSH) at its C-terminus by the MOCS3 homolog UBA4. The sulfur is then transferred to tRNA to form 2-thiolation of mcm(5)S(2)U. Prior mcm(5) tRNA modification by the elongator complex is required for 2-thiolation. Also acts as a ubiquitin-like protein (UBL) that is covalently conjugated via an isopeptide bond to lysine residues of target proteins such as AHP1. The thiocarboxylated form serves as substrate for conjugation and oxidative stress specifically induces the formation of UBL-protein conjugates. The sequence is that of Ubiquitin-related modifier 1 from Debaryomyces hansenii (strain ATCC 36239 / CBS 767 / BCRC 21394 / JCM 1990 / NBRC 0083 / IGC 2968) (Yeast).